A 578-amino-acid polypeptide reads, in one-letter code: Type I restriction enzyme MjaVIII methylase subunit (578 aa).

S-adenosyl-L-methionine is bound by residues 250–255 (EVYTPI), 280–282 (SGS), Glu303, and 332–333 (DS).

The protein belongs to the N(4)/N(6)-methyltransferase family. As to quaternary structure, the type I restriction/modification system is composed of three polypeptides R, M and S.

It carries out the reaction a 2'-deoxyadenosine in DNA + S-adenosyl-L-methionine = an N(6)-methyl-2'-deoxyadenosine in DNA + S-adenosyl-L-homocysteine + H(+). In terms of biological role, the subtype gamma methyltransferase (M) subunit of a type I restriction enzyme. The M and S subunits together form a methyltransferase (MTase) that methylates A-2 on the top and A-3 on the bottom strand of the sequence 5'-GAYN(5)GTAA-3'. In the presence of the R subunit the complex can also act as an endonuclease, binding to the same target sequence but cutting the DNA some distance from this site. Whether the DNA is cut or modified depends on the methylation state of the target sequence. When the target site is unmodified, the DNA is cut. When the target site is hemimethylated, the complex acts as a maintenance MTase modifying the DNA so that both strands become methylated. After locating a non-methylated recognition site, the enzyme complex serves as a molecular motor that translocates DNA in an ATP-dependent manner until a collision occurs that triggers cleavage. This is Type I restriction enzyme MjaVIII methylase subunit from Methanocaldococcus jannaschii (strain ATCC 43067 / DSM 2661 / JAL-1 / JCM 10045 / NBRC 100440) (Methanococcus jannaschii).